Reading from the N-terminus, the 264-residue chain is Thymidylate synthase (264 aa).

Position 21 (Arg-21) interacts with dUMP. (6R)-5,10-methylene-5,6,7,8-tetrahydrofolate is bound at residue His-51. Position 126 to 127 (126 to 127) interacts with dUMP; sequence RR. Catalysis depends on Cys-146, which acts as the Nucleophile. Residues 166-169, Asn-177, and 207-209 each bind dUMP; these read RSCD and HLY. Asp-169 is a binding site for (6R)-5,10-methylene-5,6,7,8-tetrahydrofolate. Ala-263 is a binding site for (6R)-5,10-methylene-5,6,7,8-tetrahydrofolate.

Belongs to the thymidylate synthase family. Bacterial-type ThyA subfamily. Homodimer.

The protein resides in the cytoplasm. It catalyses the reaction dUMP + (6R)-5,10-methylene-5,6,7,8-tetrahydrofolate = 7,8-dihydrofolate + dTMP. Its pathway is pyrimidine metabolism; dTTP biosynthesis. In terms of biological role, catalyzes the reductive methylation of 2'-deoxyuridine-5'-monophosphate (dUMP) to 2'-deoxythymidine-5'-monophosphate (dTMP) while utilizing 5,10-methylenetetrahydrofolate (mTHF) as the methyl donor and reductant in the reaction, yielding dihydrofolate (DHF) as a by-product. This enzymatic reaction provides an intracellular de novo source of dTMP, an essential precursor for DNA biosynthesis. The protein is Thymidylate synthase of Salmonella typhi.